A 639-amino-acid chain; its full sequence is Versicolorin B synthase stcN (639 aa).

A signal peptide spans 1 to 19 (MPAWSLLVLSALPVVGMFA). Residues 77 to 78 (TA) and 98 to 99 (EA) contribute to the FAD site. An N-linked (GlcNAc...) asparagine glycan is attached at Asn-109. 164–167 (GAML) is an FAD binding site. The N-linked (GlcNAc...) asparagine glycan is linked to Asn-214. One can recognise a PAS domain in the interval 263–301 (GFSNGQLLGRSYITHTIHPKTRRRDTASTSYLQTALRTS). Asn-444 and Asn-501 each carry an N-linked (GlcNAc...) asparagine glycan. FAD contacts are provided by residues Ala-609 and 620-621 (PM).

Belongs to the GMC oxidoreductase family. In terms of assembly, homodimer. FAD is required as a cofactor.

The protein resides in the cytoplasm. It localises to the cytosol. The catalysed reaction is (2S-3S)-versiconal hemiacetal = versicolorin B + H2O. It carries out the reaction (S)-5'-oxoaverantin + H(+) = (1'S,5'S)-averufin + H2O. The protein operates within mycotoxin biosynthesis; sterigmatocystin biosynthesis. Functionally, norsolorinic acid reductase; part of the gene cluster that mediates the biosynthesis of sterigmatocystin (ST), a polyketide-derived furanocoumarin which is part of the most toxic and carcinogenic compounds among the known mycotoxins. The first step in the biosynthesis of sterigmatocystin is the production of hexanoate by the fatty acid synthase (FAS) units stcJ and stcK. The polyketide backbone is assembled by the non-reducing polyketide synthase stcA by condensation of the starter hexanoyl-CoA and 7 malonyl-CoA extender units followed by cyclization and release of norsolorinic acid. Norsolorinic acid is the first stable intermediate in the biosynthesis of sterigmatocystin and is converted into averantin (AVN) by the ketoreductase stcE which reduces the hexanoate ketone to an alcohol. Averantin is then oxidized into 5'-hydroxyaverantin (HAVN) by the cytochrome P450 monooxygenase stcF. 5'-hydroxyaverantin is further converted to 5'-oxyaverantin (OAVN) by the 5'-hydroxyaverantin dehydrogenase stcG. The next step is the conversion of OAVN into averufin (AVF) which is catalyzed by a yet to be identified enzyme. The cytochrome P450 monooxygenase stcB and the flavin-binding monooxygenase stcW are both required for the conversion of averufin to 1-hydroxyversicolorone. The esterase stcI probably catalyzes the formation of versiconal hemiacetal acetate from 1-hydroxyversicolorone. The oxydoreductase stcN then probably catalyzes the biosynthetic step from versiconal to versicolorin B (VERB). The next step is performed by the versicolorin B desaturase stcL to produce versicolorin A (VERA). The ketoreductase stcU and the cytochrome P450 monooxygenase stcS are involved in the conversion of versicolorin A to demethylsterigmatocystin. The Baeyer-Villiger oxidas stcQ and the reductase stcR might be involved in the biosynthetic step from versicolorin A to demethylsterigmatocystin. The final step in the biosynthesis of sterigmatocystin is the methylation of demethylsterigmatocystin catalyzed by the methyltransferase stcP. The sequence is that of Versicolorin B synthase stcN from Emericella nidulans (strain FGSC A4 / ATCC 38163 / CBS 112.46 / NRRL 194 / M139) (Aspergillus nidulans).